Here is a 435-residue protein sequence, read N- to C-terminus: Probable protein arginine N-methyltransferase 6 (435 aa).

A disordered region spans residues 1–48 (MQSGGDFSNGFHGDHHRELELEDKQGPSLSSFGRAKKRSHAGARDPRG). Residues 12 to 25 (HGDHHRELELEDKQ) are compositionally biased toward basic and acidic residues. Positions 80–418 (DVAYFHSYAH…KENKRFMNIH (339 aa)) constitute an SAM-dependent MTase PRMT-type domain. S-adenosyl-L-methionine contacts are provided by His93, Arg102, Gly126, Asp148, and Glu177. Catalysis depends on residues Glu191 and Glu200. The interval 333–377 (PAKNTSETSIASGSSSISPSGEVNQKKRTNPSDALVLSTSPESPP) is disordered. The segment covering 337-354 (TSETSIASGSSSISPSGE) has biased composition (low complexity).

Belongs to the class I-like SAM-binding methyltransferase superfamily. Protein arginine N-methyltransferase family. PRMT6 subfamily.

Its function is as follows. Arginine methyltransferase that can both catalyze the formation of omega-N monomethylarginine (MMA) and asymmetrical dimethylarginine (aDMA). The protein is Probable protein arginine N-methyltransferase 6 (PRMT6) of Arabidopsis thaliana (Mouse-ear cress).